The sequence spans 566 residues: Cyclin G (566 aa).

Positions 285 to 368 (MWYELPSDVL…VIANKLGVQM (84 aa)) constitute a Cyclin N-terminal domain.

This sequence belongs to the cyclin family. Cyclin G subfamily. In terms of assembly, interacts with corto. Interacts with the cyclin-dependent kinases Cdk2 and Cdk4. Interacts with Brca2 and Rad9. Interacts with polycomb protein Asx. Interacts with protein phosphatase 2A subunit wdb.

It is found in the chromosome. Cyclin with roles in multiple processes including transcription, meiotic recombination repair, cell cycle regulation, and promotion of normal growth and metabolism. Binds to the promoter region of the homeobox gene Abd-B and is involved in maintaining Abd-B expression in the pupal epithelium. Involved in the transcriptional repression of the homeotic genes Scr and Ubx. Plays a role in meiotic recombination repair of DNA double-strand breaks which ensures efficient translation of grk and promotes grk activity in the oocyte, leading to oocyte dorso-ventral axis formation following secretion of grk from the oocyte and its binding to Egfr in the directly overlying follicle cells. Negatively regulates the binding of serine/threonine-protein kinase Akt1 to the protein phosphatase 2A subunit wdb, promoting normal growth and metabolism. Required for the formation of bilateral symmetry. Negatively regulates cell cycle progression by preventing G1 to S transition and retarding S-phase progression. The protein is Cyclin G of Drosophila melanogaster (Fruit fly).